The sequence spans 305 residues: GMP synthase [glutamine-hydrolyzing] subunit B (305 aa).

The GMPS ATP-PPase domain maps to 2–185 (VEPTAFIDEK…LDLESIIAER (184 aa)). 29-35 (SGGVDSS) provides a ligand contact to ATP.

Heterodimer composed of a glutamine amidotransferase subunit (A) and a GMP-binding subunit (B).

The catalysed reaction is XMP + L-glutamine + ATP + H2O = GMP + L-glutamate + AMP + diphosphate + 2 H(+). The protein operates within purine metabolism; GMP biosynthesis; GMP from XMP (L-Gln route): step 1/1. Catalyzes the synthesis of GMP from XMP. In Natronomonas pharaonis (strain ATCC 35678 / DSM 2160 / CIP 103997 / JCM 8858 / NBRC 14720 / NCIMB 2260 / Gabara) (Halobacterium pharaonis), this protein is GMP synthase [glutamine-hydrolyzing] subunit B.